Reading from the N-terminus, the 771-residue chain is Probable exo-1,4-beta-xylosidase bxlB (771 aa).

Residues 1-25 form the signal peptide; it reads MAHITSWHYGNAIALLVSLAPGALS. N-linked (GlcNAc...) asparagine glycosylation occurs at asparagine 67. Residue aspartate 293 is part of the active site. Asparagine 305, asparagine 345, asparagine 423, and asparagine 464 each carry an N-linked (GlcNAc...) asparagine glycan.

The protein belongs to the glycosyl hydrolase 3 family.

The protein localises to the secreted. The catalysed reaction is Hydrolysis of (1-&gt;4)-beta-D-xylans, to remove successive D-xylose residues from the non-reducing termini.. It functions in the pathway glycan degradation; xylan degradation. Its function is as follows. Xylan 1,4-beta-xylosidase involved in the hydrolysis of xylan, a major structural heterogeneous polysaccharide found in plant biomass representing the second most abundant polysaccharide in the biosphere, after cellulose. The chain is Probable exo-1,4-beta-xylosidase bxlB (bxlB) from Aspergillus fumigatus (strain CBS 144.89 / FGSC A1163 / CEA10) (Neosartorya fumigata).